The primary structure comprises 177 residues: Large ribosomal subunit protein uL6 (177 aa).

Belongs to the universal ribosomal protein uL6 family. Part of the 50S ribosomal subunit.

Its function is as follows. This protein binds to the 23S rRNA, and is important in its secondary structure. It is located near the subunit interface in the base of the L7/L12 stalk, and near the tRNA binding site of the peptidyltransferase center. The polypeptide is Large ribosomal subunit protein uL6 (Zymomonas mobilis subsp. mobilis (strain ATCC 31821 / ZM4 / CP4)).